A 570-amino-acid polypeptide reads, in one-letter code: Eukaryotic translation initiation factor 2A (570 aa).

WD repeat units follow at residues 274–316 (EKKG…FDTI) and 318–358 (GPRN…EIIS). The segment at 468–526 (PPHLRKPLGGGGSAGPPSAAAPTPGNQNQRPAQPRANGNGNAPQPFRPQQSEQERKAFQ) is disordered. Over residues 482–492 (GPPSAAAPTPG) the composition is skewed to low complexity. Polar residues predominate over residues 493–518 (NQNQRPAQPRANGNGNAPQPFRPQQS). Residues 519–541 (EQERKAFQLKKKVEEIKVLKQRV) are a coiled coil.

Belongs to the WD repeat EIF2A family.

Functions in the early steps of protein synthesis of a small number of specific mRNAs. Acts by directing the binding of methionyl-tRNAi to 40S ribosomal subunits. In contrast to the eIF-2 complex, it binds methionyl-tRNAi to 40S subunits in a codon-dependent manner, whereas the eIF-2 complex binds methionyl-tRNAi to 40S subunits in a GTP-dependent manner. The polypeptide is Eukaryotic translation initiation factor 2A (Caenorhabditis elegans).